Reading from the N-terminus, the 881-residue chain is DNA mismatch repair protein MutS (881 aa).

G612–S619 provides a ligand contact to ATP.

Belongs to the DNA mismatch repair MutS family.

Its function is as follows. This protein is involved in the repair of mismatches in DNA. It is possible that it carries out the mismatch recognition step. This protein has a weak ATPase activity. In Clostridium tetani (strain Massachusetts / E88), this protein is DNA mismatch repair protein MutS.